We begin with the raw amino-acid sequence, 286 residues long: Bifunctional protein FolD (286 aa).

NADP(+) contacts are provided by residues 165 to 167 and serine 190; that span reads GRS.

This sequence belongs to the tetrahydrofolate dehydrogenase/cyclohydrolase family. In terms of assembly, homodimer.

The enzyme catalyses (6R)-5,10-methylene-5,6,7,8-tetrahydrofolate + NADP(+) = (6R)-5,10-methenyltetrahydrofolate + NADPH. The catalysed reaction is (6R)-5,10-methenyltetrahydrofolate + H2O = (6R)-10-formyltetrahydrofolate + H(+). Its pathway is one-carbon metabolism; tetrahydrofolate interconversion. Functionally, catalyzes the oxidation of 5,10-methylenetetrahydrofolate to 5,10-methenyltetrahydrofolate and then the hydrolysis of 5,10-methenyltetrahydrofolate to 10-formyltetrahydrofolate. In Paraburkholderia phytofirmans (strain DSM 17436 / LMG 22146 / PsJN) (Burkholderia phytofirmans), this protein is Bifunctional protein FolD.